An 863-amino-acid polypeptide reads, in one-letter code: MQEQYKPSEIEAKVQQHWQDKKTFEVTEDENKEKFYCLSMFPYPSGRLHMGHVRNYTIGDVVARYQRLQGKNVLQPIGWDSFGLPAENAAIKNNTAPAPWTYENIDYMKNQLKMLGFGYDWSREIATCTPEYYRWEQWFFTKLFEKGLVYKKTASVNWCPNDETVLANEQVIDGCCWRCDTTVEQKEIPQWFIKITEYADELLKDIDQLDEWPEQVKTMQRNWIGRSEGIEMTFGVVDSEETFDIYTTRPDTVMGVTYVAIAAGHPLAEKAAANNSELSDFIEECKNADTTEAAMAAMEKKGVATGLYATHPLTGKQVPIWAANFVLMNYGTGAVMSVPAHDQRDYEFATKYGLAIEGVIKPSDSDLDISEEAYTEKGVLFNSGDSFPELDGLDFQDAFDAIDAKLSSEGKGKRQVNFRLRDWGVSRQRYWGAPIPMVTLADGTVVPTPEDQLPVILPEDVVMDGIQSPIKADKEWAKTQINGQEAFRETDTFDTFMESSWYYARYCSPHADEMLDPAKANYWLPVDQYIGGIEHACMHLLYFRFFHKLLRDIGLVNSDEPAKRLLTQGMVLADAFYYNNEKGARVWVAPSDVTVQETDEKGRIQKAVDSEGHELVYTGMSKMSKSKNNGIDPQVMVDKYGADTVRLFMMFAAPPELTLEWQESSVEGAHRFIKRLWKVAHDHVAKGATAPLDVKTLDTKQKELRRELHKTIVKVGDDIERRQMFNTAIASVMELMNRLQKAPTETQQDRALMQEALSAVVRLLYPIIPHTSFSLWNDLGNEENIEDVRWPEADQSALVEDSKLIIVQVNGKLRAKITVPADATKEVVEEQGFAEEGVIKHTEGKTVRKVIYVPGKLLNIVAN.

The 'HIGH' region signature appears at P42–H52. Positions K622–S626 match the 'KMSKS' region motif. K625 contributes to the ATP binding site.

It belongs to the class-I aminoacyl-tRNA synthetase family.

The protein localises to the cytoplasm. The enzyme catalyses tRNA(Leu) + L-leucine + ATP = L-leucyl-tRNA(Leu) + AMP + diphosphate. This chain is Leucine--tRNA ligase, found in Shewanella sediminis (strain HAW-EB3).